An 82-amino-acid polypeptide reads, in one-letter code: Small ribosomal subunit protein bS16 (82 aa).

It belongs to the bacterial ribosomal protein bS16 family.

This Vibrio vulnificus (strain CMCP6) protein is Small ribosomal subunit protein bS16.